The primary structure comprises 360 residues: Protein Wnt-2 (360 aa).

A signal peptide spans Met-1–Ser-25. 11 disulfides stabilise this stretch: Cys-76-Cys-87, Cys-127-Cys-135, Cys-137-Cys-157, Cys-206-Cys-220, Cys-208-Cys-215, Cys-278-Cys-309, Cys-294-Cys-304, Cys-308-Cys-348, Cys-324-Cys-339, Cys-326-Cys-336, and Cys-331-Cys-332. The O-palmitoleoyl serine; by PORCN moiety is linked to residue Ser-212. Asn-295 carries an N-linked (GlcNAc...) asparagine glycan.

The protein belongs to the Wnt family. In terms of processing, palmitoleoylation is required for efficient binding to frizzled receptors. Depalmitoleoylation leads to Wnt signaling pathway inhibition.

The protein localises to the secreted. Its subcellular location is the extracellular space. The protein resides in the extracellular matrix. In terms of biological role, ligand for members of the frizzled family of seven transmembrane receptors. Functions in the canonical Wnt signaling pathway that results in activation of transcription factors of the TCF/LEF family. Functions as a upstream regulator of FGF10 expression. Plays an important role in embryonic lung development. May contribute to embryonic brain development by regulating the proliferation of dopaminergic precursors and neurons. This chain is Protein Wnt-2 (WNT2), found in Loxodonta africana (African elephant).